The sequence spans 339 residues: Serpentine receptor class alpha-24 (339 aa).

Helical transmembrane passes span 26 to 46, 65 to 82, 112 to 132, 151 to 171, 199 to 219, 248 to 268, and 284 to 304; these read ITVKMSSVLVVTVILLSYYFA, LILLVCLLNSIIHQTTML, ELFVYYLTTYFSTYSVFSLAF, VSIFLLFIQLIFTLGTYYVGL, FRTLIMGICIIVTVFVYYLSV, VCILIVLQFACILISSLGVNY, and LAPFFVGVTYANLCLPLVIHC.

This sequence belongs to the nematode receptor-like protein sra family.

Its subcellular location is the membrane. The protein is Serpentine receptor class alpha-24 (sra-24) of Caenorhabditis elegans.